Consider the following 855-residue polypeptide: Suppressor of tumorigenicity 14 protein (855 aa).

Positions 1 to 20 (MGSDRARKGGGGPKDFGAGL) are disordered. Topologically, residues 1–55 (MGSDRARKGGGGPKDFGAGLKYNSRHEKVNGLEEGVEFLPVNNVKKVEKHGPGRW) are cytoplasmic. A helical; Signal-anchor for type II membrane protein membrane pass occupies residues 56 to 76 (VVLAAVLIGLLLVLLGIGFLV). The Extracellular segment spans residues 77-855 (WHLQYRDVRV…RDWIKENTGV (779 aa)). An SEA domain is found at 86–203 (VQKVFNGYMR…TSVVAFPTDS (118 aa)). N-linked (GlcNAc...) asparagine glycosylation is present at Asn109. The cysteines at positions 214 and 244 are disulfide-linked. CUB domains are found at residues 214–334 (CSFG…FFQL) and 340–447 (CGGR…YLSY). Asn302 carries an N-linked (GlcNAc...) asparagine glycan. 15 disulfide bridges follow: Cys340–Cys366, Cys397–Cys410, Cys453–Cys464, Cys459–Cys477, Cys471–Cys486, Cys488–Cys501, Cys496–Cys514, Cys508–Cys523, Cys525–Cys537, Cys532–Cys550, Cys544–Cys559, Cys567–Cys579, Cys574–Cys593, Cys587–Cys602, and Cys641–Cys657. 4 consecutive LDL-receptor class A domains span residues 452-487 (PCPGQFTCRTGRCIRKELRCDGWADCTDHSDELNCS), 487-524 (SCDAGHQFTCKNKFCKPLFWVCDSVNDCGDNSDEQGCS), 524-560 (SCPAQTFRCSNGKCLSKSQQCNGKDDCGDGSDEASCP), and 566-603 (TCTKHTYRCLNGLCLSKGNPECDGKEDCSDGSDEKDCD). Asn485 carries an N-linked (GlcNAc...) asparagine glycan. Residues 615–854 (VVGGTDADEG…FRDWIKENTG (240 aa)) form the Peptidase S1 domain. Catalysis depends on charge relay system residues His656 and Asp711. Asn772 carries an N-linked (GlcNAc...) asparagine glycan. Disulfide bonds link Cys776-Cys790 and Cys801-Cys830. The active-site Charge relay system is the Ser805.

This sequence belongs to the peptidase S1 family. As to quaternary structure, interacts with CDCP1. May interact with TMEFF1. Interacts with iripin-3, a serine protease inhibitor from Ixodes ricinus saliva. Interacts with iripin-1, a serine protease inhibitor from Ixodes ricinus saliva.

It is found in the membrane. It carries out the reaction Cleaves various synthetic substrates with Arg or Lys at the P1 position and prefers small side-chain amino acids, such as Ala and Gly, at the P2 position.. In terms of biological role, exhibits trypsin-like activity as defined by cleavage of synthetic substrates with Arg or Lys as the P1 site. Involved in the terminal differentiation of keratinocytes through prostasin (PRSS8) activation and filaggrin (FLG) processing. Proteolytically cleaves and therefore activates TMPRSS13. The sequence is that of Suppressor of tumorigenicity 14 protein (ST14) from Homo sapiens (Human).